Consider the following 520-residue polypeptide: 2-isopropylmalate synthase (520 aa).

Residues 12–274 (IRIFDTTLRD…DSAINTPRIV (263 aa)) form the Pyruvate carboxyltransferase domain. The Mn(2+) site is built by D21, H209, H211, and N245. The interval 396–520 (RLASMTISDV…VVAGKTAAVA (125 aa)) is regulatory domain.

Belongs to the alpha-IPM synthase/homocitrate synthase family. LeuA type 1 subfamily. Homodimer. Requires Mn(2+) as cofactor.

The protein resides in the cytoplasm. The enzyme catalyses 3-methyl-2-oxobutanoate + acetyl-CoA + H2O = (2S)-2-isopropylmalate + CoA + H(+). The protein operates within amino-acid biosynthesis; L-leucine biosynthesis; L-leucine from 3-methyl-2-oxobutanoate: step 1/4. Its function is as follows. Catalyzes the condensation of the acetyl group of acetyl-CoA with 3-methyl-2-oxobutanoate (2-ketoisovalerate) to form 3-carboxy-3-hydroxy-4-methylpentanoate (2-isopropylmalate). This chain is 2-isopropylmalate synthase, found in Xanthomonas axonopodis pv. citri (strain 306).